Consider the following 205-residue polypeptide: Cbp/p300-interacting transactivator 3 (205 aa).

The protein belongs to the CITED family.

The protein localises to the nucleus. Acts as a transcriptional coactivator. Enhances estrogen-dependent transactivation mediated by estrogen receptors. This chain is Cbp/p300-interacting transactivator 3 (CITED3), found in Gallus gallus (Chicken).